Here is a 128-residue protein sequence, read N- to C-terminus: 14 kDa zinc-binding protein (128 aa).

Residues 18 to 128 (IFDKIIKKEI…GGRQMNWPPG (111 aa)) enclose the HIT domain. The Histidine triad motif signature appears at 112–116 (HIHVH).

Homodimer.

This is 14 kDa zinc-binding protein (ZBP14) from Zea mays (Maize).